A 66-amino-acid chain; its full sequence is Small ribosomal subunit protein bS21 (66 aa).

The protein belongs to the bacterial ribosomal protein bS21 family.

The chain is Small ribosomal subunit protein bS21 from Solidesulfovibrio magneticus (strain ATCC 700980 / DSM 13731 / RS-1) (Desulfovibrio magneticus).